The sequence spans 931 residues: MEIIMRNLCFLLTLVATLLLPGRLIAAALPQDEKLITGQLDNGLRYMIYPHAHPKDQVNLWLQIHTGSLQEEDNELGVAHFVEHMMFNGTKTWPGNKVIETFESMGLRFGRDVNAYTSYDETVYQVSLPTTQKQNLQQVMAIFSEWSNAATFEKLEVDAERGVITEEWRAHQDAKWRTSQARRPFLLANTRNLDREPIGLMDTVATVTPAQLRQFYQRWYQPNNMTFIVVGDIDSKEALALIKDNLSKLPANKAAENRVWPTKAENHLRFNIINDKENRVNGIALYYRLPMVQVNDEQSFIEQAEWSMLVQLFNQRLQERIQSGELKTISGGTARSVKIAPDYQSLFFRVNARDDNMQDAANALMAELATIDQHGFSAEELDDVKSTRLTWLKNAVDQQAERDLRMLTSRLASSSLNNTPFLSPEETYQLSKRLWQQITVQSLAEKWQQLRKNQDAFWEQMVNNEVAAKKALSPAAILALEKEYANKKLAAYVFPGRNLSLTVDADPQAEISSKETLAENLTSLTLSNGARVILAKSAGEEQKLQIIAVSNKGDLSFPAQQKSLIALANKAVSGSGVGELSSSSLKRWSAENSVTMSSKVSGMNTLLSVSARTNNPEPGFQLINQRITHSTINDNIWASLQNAQIQALKTLDQRPAEKFAQQMYETRYADDRTKLLQENQIAQFTAADALAADRQLFSSPADITFVIVGNVAEDKLVALITRYLGSIKHSDSPLAAGKPLTRATDNASVTVKEQNEPVAQVSQWKRYDSRTPVNLPTRMALDAFNVALAKDLRVNIREQASGAYSVSSRLSVDPQAKDISHLLAFTCQPERHDELLTLANEVMVKRLAKGISEQELNEYQQNVQRSLDIQQRSVQQLANTIVNSLIQYDDPAAWTEQEQLLKQMTVENVNTAVKQYLSHPVNTYTGVLLPK.

H80 lines the Zn(2+) pocket. E83 functions as the Proton acceptor in the catalytic mechanism. H84 and E160 together coordinate Zn(2+).

The protein belongs to the peptidase M16 family. Zn(2+) serves as cofactor.

This Escherichia coli (strain K12) protein is Probable zinc protease PqqL (pqqL).